The sequence spans 378 residues: Cytochrome b (378 aa).

Helical transmembrane passes span 34-54 (FGSL…FLAM), 78-99 (WLLR…YLHV), 114-134 (WLIG…GYVL), and 179-199 (FFTF…IHLL). Residues H84 and H98 each coordinate heme b. Heme b is bound by residues H183 and H197. H202 contributes to the a ubiquinone binding site. The next 4 membrane-spanning stretches (helical) occupy residues 227 to 247 (FKDI…VLIS), 289 to 309 (LGGV…PFYN), 321 to 341 (INQV…WIGA), and 348 to 368 (YVLI…VNPL).

It belongs to the cytochrome b family. In terms of assembly, the main subunits of complex b-c1 are: cytochrome b, cytochrome c1 and the Rieske protein. It depends on heme b as a cofactor.

The protein localises to the mitochondrion inner membrane. In terms of biological role, component of the ubiquinol-cytochrome c reductase complex (complex III or cytochrome b-c1 complex) that is part of the mitochondrial respiratory chain. The b-c1 complex mediates electron transfer from ubiquinol to cytochrome c. Contributes to the generation of a proton gradient across the mitochondrial membrane that is then used for ATP synthesis. The sequence is that of Cytochrome b (mt:Cyt-b) from Drosophila simulans (Fruit fly).